A 562-amino-acid chain; its full sequence is Arginine--tRNA ligase (562 aa).

Positions 129-139 match the 'HIGH' region motif; sequence ANPTGPLHVGH.

Belongs to the class-I aminoacyl-tRNA synthetase family. Monomer.

Its subcellular location is the cytoplasm. The enzyme catalyses tRNA(Arg) + L-arginine + ATP = L-arginyl-tRNA(Arg) + AMP + diphosphate. This chain is Arginine--tRNA ligase, found in Stenotrophomonas maltophilia (strain K279a).